The sequence spans 431 residues: Ribosomal protein uS12 methylthiotransferase RimO (431 aa).

Residues 4-120 (HKLFLLSLGC…ILAALGAAYH (117 aa)) enclose the MTTase N-terminal domain. Positions 13, 49, 83, 144, 148, and 151 each coordinate [4Fe-4S] cluster. A Radical SAM core domain is found at 130 to 359 (LTPPHYTYLK…MELQESVSQD (230 aa)). Residues 362-429 (RDFEGKEITV…PFDLVGEVIG (68 aa)) form the TRAM domain.

This sequence belongs to the methylthiotransferase family. RimO subfamily. [4Fe-4S] cluster is required as a cofactor.

Its subcellular location is the cytoplasm. It carries out the reaction L-aspartate(89)-[ribosomal protein uS12]-hydrogen + (sulfur carrier)-SH + AH2 + 2 S-adenosyl-L-methionine = 3-methylsulfanyl-L-aspartate(89)-[ribosomal protein uS12]-hydrogen + (sulfur carrier)-H + 5'-deoxyadenosine + L-methionine + A + S-adenosyl-L-homocysteine + 2 H(+). In terms of biological role, catalyzes the methylthiolation of an aspartic acid residue of ribosomal protein uS12. In Pelodictyon phaeoclathratiforme (strain DSM 5477 / BU-1), this protein is Ribosomal protein uS12 methylthiotransferase RimO.